A 219-amino-acid chain; its full sequence is Ribose-5-phosphate isomerase A (219 aa).

Substrate-binding positions include 28-31 (SGST), 81-84 (DGAD), and 94-97 (KGGG). Glu-103 (proton acceptor) is an active-site residue. Position 121 (Lys-121) interacts with substrate.

The protein belongs to the ribose 5-phosphate isomerase family. Homodimer.

The catalysed reaction is aldehydo-D-ribose 5-phosphate = D-ribulose 5-phosphate. The protein operates within carbohydrate degradation; pentose phosphate pathway; D-ribose 5-phosphate from D-ribulose 5-phosphate (non-oxidative stage): step 1/1. Catalyzes the reversible conversion of ribose-5-phosphate to ribulose 5-phosphate. In Histophilus somni (strain 2336) (Haemophilus somnus), this protein is Ribose-5-phosphate isomerase A.